We begin with the raw amino-acid sequence, 281 residues long: CCAAT/enhancer-binding protein epsilon (281 aa).

A disordered region spans residues 1-30 (MSHGTYYECEPRGGQQPLEFSGGRAGPGEL). Lys-121 is covalently cross-linked (Glycyl lysine isopeptide (Lys-Gly) (interchain with G-Cter in SUMO2)). Ser-181 bears the Phosphoserine mark. Residues 204–267 (SLEYRLRRER…DTLRNLFRQI (64 aa)) enclose the bZIP domain. The interval 208–228 (RLRRERNNIAVRKSRDKAKRR) is basic motif. The segment at 230-237 (LETQQKVL) is leucine-zipper.

It belongs to the bZIP family. C/EBP subfamily. As to quaternary structure, binds DNA as a homodimer and as a heterodimer. Can form stable heterodimers with CEBPA, CEBPB and CEBPD. Interacts with GATA1 and SPI1. Interacts with SMARCD2. Post-translationally, phosphorylated. As to expression, strongest expression occurs in promyelocyte and late-myeloblast-like cell lines.

It localises to the nucleus. Its function is as follows. Transcriptional activator. C/EBP are DNA-binding proteins that recognize two different motifs: the CCAAT homology common to many promoters and the enhanced core homology common to many enhancers. Required for the promyelocyte-myelocyte transition in myeloid differentiation. The protein is CCAAT/enhancer-binding protein epsilon (CEBPE) of Homo sapiens (Human).